A 294-amino-acid chain; its full sequence is Picrinine-N-methytransferase TMT2 (294 aa).

Residues 75-84 (LLDVGCGLGG) are SAM motif I. Residues 137 to 143 (DGEFDVV) carry the Vacuolar targeting signal motif. Residues 138 to 146 (GEFDVVFTL) form an SAM motif II region. The SAM motif III stretch occupies residues 165–174 (VGSPGAAIVV).

The protein belongs to the class I-like SAM-binding methyltransferase superfamily. gTMT family. In terms of assembly, homodimer.

It localises to the vacuole membrane. It catalyses the reaction picrinine + S-adenosyl-L-methionine = ervincine + S-adenosyl-L-homocysteine + H(+). It participates in alkaloid biosynthesis; vindoline biosynthesis. Functionally, S-adenosyl-L-methionine-dependent N-methyltransferase involved in the biosynthesis of biologically active monoterpenoid indole alkaloids (MIAs) natural products including vindoline. Catalyzes the conversion of picrinine to N-methylpicrinine (ervincine). This is Picrinine-N-methytransferase TMT2 from Catharanthus roseus (Madagascar periwinkle).